Here is a 328-residue protein sequence, read N- to C-terminus: MIYQMQMPEKIDVDEGTHNDKNGIFIAQPLERGYGVTLGNAMRRVLLASLPGTAITGIKIDGVFHEFSAIDGVREDVPDIILNLKKVRFRSSTKRSCKTTVTVDGPADVTAGDIVAQEGEFEVLNTDLHIATVNEGSRLSMDVYIGRGRGYVPAEDNRGDGMPLGFIAIDSIFTPIKNVKFSVENTRVGQRTDYEKMILDVETDGSVSPDDSISLAGKIINEHVSLFANFSPTDEEFTEEEYKQQDDEFENMRKMLLTRIEDLDLSVRSHNCLRLAEIDTLGDLVSRKEDELLTYKNFGKKSLTELKEQLEKFELKFGMDITKYQMKG.

Residues M1 to S231 are alpha N-terminal domain (alpha-NTD). The tract at residues M252 to G328 is alpha C-terminal domain (alpha-CTD).

It belongs to the RNA polymerase alpha chain family. In terms of assembly, homodimer. The RNAP catalytic core consists of 2 alpha, 1 beta, 1 beta' and 1 omega subunit. When a sigma factor is associated with the core the holoenzyme is formed, which can initiate transcription.

It carries out the reaction RNA(n) + a ribonucleoside 5'-triphosphate = RNA(n+1) + diphosphate. Functionally, DNA-dependent RNA polymerase catalyzes the transcription of DNA into RNA using the four ribonucleoside triphosphates as substrates. This Chlorobium phaeobacteroides (strain BS1) protein is DNA-directed RNA polymerase subunit alpha.